Here is a 423-residue protein sequence, read N- to C-terminus: Glucose-1-phosphate adenylyltransferase (423 aa).

Alpha-D-glucose 1-phosphate-binding positions include Y107, G172, 187-188, and S205; that span reads EK.

Belongs to the bacterial/plant glucose-1-phosphate adenylyltransferase family. In terms of assembly, homotetramer.

It catalyses the reaction alpha-D-glucose 1-phosphate + ATP + H(+) = ADP-alpha-D-glucose + diphosphate. It functions in the pathway glycan biosynthesis; glycogen biosynthesis. In terms of biological role, involved in the biosynthesis of ADP-glucose, a building block required for the elongation reactions to produce glycogen. Catalyzes the reaction between ATP and alpha-D-glucose 1-phosphate (G1P) to produce pyrophosphate and ADP-Glc. The chain is Glucose-1-phosphate adenylyltransferase from Cereibacter sphaeroides (strain ATCC 17029 / ATH 2.4.9) (Rhodobacter sphaeroides).